The sequence spans 141 residues: Nucleoside diphosphate kinase (141 aa).

K11, F59, R87, T93, R104, and N114 together coordinate ATP. Residue H117 is the Pros-phosphohistidine intermediate of the active site.

This sequence belongs to the NDK family. As to quaternary structure, homotetramer. Mg(2+) is required as a cofactor.

It is found in the cytoplasm. It catalyses the reaction a 2'-deoxyribonucleoside 5'-diphosphate + ATP = a 2'-deoxyribonucleoside 5'-triphosphate + ADP. The catalysed reaction is a ribonucleoside 5'-diphosphate + ATP = a ribonucleoside 5'-triphosphate + ADP. Major role in the synthesis of nucleoside triphosphates other than ATP. The ATP gamma phosphate is transferred to the NDP beta phosphate via a ping-pong mechanism, using a phosphorylated active-site intermediate. This is Nucleoside diphosphate kinase from Delftia acidovorans (strain DSM 14801 / SPH-1).